A 379-amino-acid polypeptide reads, in one-letter code: Cathepsin B-like cysteine proteinase 6 (379 aa).

An N-terminal signal peptide occupies residues methionine 1 to cysteine 16. The propeptide occupies alanine 17–aspartate 104. Cystine bridges form between cysteine 118–cysteine 147, cysteine 130–cysteine 174, cysteine 166–cysteine 233, cysteine 167–cysteine 170, cysteine 203–cysteine 237, and cysteine 211–cysteine 223. Cysteine 133 is an active-site residue. A glycan (N-linked (GlcNAc...) asparagine) is linked at asparagine 196. An N-linked (GlcNAc...) asparagine; atypical glycan is attached at asparagine 201. Residues histidine 305 and asparagine 325 contribute to the active site.

It belongs to the peptidase C1 family.

The sequence is that of Cathepsin B-like cysteine proteinase 6 (cpr-6) from Caenorhabditis elegans.